The following is a 293-amino-acid chain: 4-diphosphocytidyl-2-C-methyl-D-erythritol kinase (293 aa).

Lysine 16 is a catalytic residue. 99-109 (PMGAGLGGGSS) contacts ATP. Residue aspartate 141 is part of the active site.

The protein belongs to the GHMP kinase family. IspE subfamily.

It carries out the reaction 4-CDP-2-C-methyl-D-erythritol + ATP = 4-CDP-2-C-methyl-D-erythritol 2-phosphate + ADP + H(+). It participates in isoprenoid biosynthesis; isopentenyl diphosphate biosynthesis via DXP pathway; isopentenyl diphosphate from 1-deoxy-D-xylulose 5-phosphate: step 3/6. Its function is as follows. Catalyzes the phosphorylation of the position 2 hydroxy group of 4-diphosphocytidyl-2C-methyl-D-erythritol. The polypeptide is 4-diphosphocytidyl-2-C-methyl-D-erythritol kinase (Paraburkholderia xenovorans (strain LB400)).